Consider the following 964-residue polypeptide: DNA mismatch repair protein MSH2 (964 aa).

688 to 695 provides a ligand contact to ATP; that stretch reads GPNMGGKS. Residues 851–964 form an interaction with MSH6 region; that stretch reads DQSFGIHVAE…YLKYIKALLL (114 aa).

The protein belongs to the DNA mismatch repair MutS family. Heterodimer consisting of MSH2-MSH6 (MutS alpha) or MSH2-MSH3 (MutS beta). Both heterodimers form a ternary complex with MutL alpha (MLH1-PMS1). MutS beta also forms a ternary complex with MutL beta (MLH1-MLH3), and possibly with a MLH1-MLH2 heterodimer. Both heterodimers interact with proliferating cell nuclear antigen (PCNA/POL30). This interaction is disrupted upon binding of the MutS heterodimers to mismatch DNA. Interacts with SAW1.

Its subcellular location is the nucleus. Inhibited by Cd(2+). Its function is as follows. Component of the post-replicative DNA mismatch repair system (MMR). Forms two different heterodimers: MutS alpha (MSH2-MSH6 heterodimer) and MutS beta (MSH2-MSH3 heterodimer), which bind to DNA mismatches thereby initiating DNA repair. MSH2 seems to act as a scaffold for the other MutS homologs that provide substrate-binding and substrate specificity. When bound, heterodimers bend the DNA helix and shield approximately 20 base pairs. MutS alpha acts mainly to repair base-base and single insertion-deletion mismatches that occur during replication, but can also repair longer insertion-deletion loops (IDLs), although with decreasing efficiency as the size of the extrahelical loop increases. MutS beta acts mainly to repair IDLs from 2 to 13 nucleotides in size, but can also repair base-base and single insertion-deletion mismatches. After mismatch binding, MutS alpha or beta form a ternary complex with a MutL heterodimer, which is thought to be responsible for directing the downstream MMR events, including strand discrimination, excision, and resynthesis. ATP binding and hydrolysis play a pivotal role in mismatch repair functions. Both subunits bind ATP, but with differing affinities, and their ATPase kinetics are also very different. MSH6 binds and hydrolyzes ATP rapidly, whereas MSH2 catalyzes ATP at a substantially slower rate. Binding to a mismatched base pair suppresses MSH6-catalyzed ATP hydrolysis, but not the activity of MSH2. ATP binding to both subunits is necessary to trigger a change in MutS alpha interaction with mismatched DNA, converting MutS alpha into a sliding clamp capable of hydrolysis-independent movement along DNA, and also facilitates formation of ternary complexes containing MutS and MutL proteins and the mismatch. MutS beta also has a role in regulation of heteroduplex formation during mitotic and meiotic recombination. MutS beta binds to DNA flap structures predicted to form during recombination, and is required for 3' non-homologous tail removal (NHTR). MutS beta-binding alters the DNA conformation of its substrate at the ds/ssDNA junction and may facilitate its recognition and/or cleavage by the downstream nucleotide excision repair (NER) RAD1-RAD10 endonuclease. The polypeptide is DNA mismatch repair protein MSH2 (MSH2) (Saccharomyces cerevisiae (strain ATCC 204508 / S288c) (Baker's yeast)).